A 2193-amino-acid chain; its full sequence is ATP-dependent helicase BRM (2193 aa).

N-acetylmethionine is present on Met1. A compositionally biased stretch (gly residues) spans 1 to 10 (MQSGGSGGGP). Disordered stretches follow at residues 1–126 (MQSG…QEGQ), 175–231 (MQDL…PGNM), 293–466 (QKAG…GFTK), 511–558 (SPAI…DNVG), and 580–649 (TSTD…ASAR). Over residues 23 to 62 (ASTSSAASPSSSSSSVQQQQQQQQQQQQQQQLASRQQQQQ) the composition is skewed to low complexity. The stretch at 38-58 (VQQQQQQQQQQQQQQQLASRQ) forms a coiled coil. The span at 79-88 (GVQGMMGGGN) shows a compositional bias: gly residues. Low complexity-rich tracts occupy residues 91–102 (SSPGSMQMPQQS), 110–126 (QQQQQQQQQGSSTQEGQ), and 180–192 (PSSQPQASSSKPS). A compositionally biased stretch (polar residues) spans 204 to 223 (ESSSQQRNETKSHPQQQVGT). Residues 301–320 (ASQSPSIPISSQPASSSVVP) show a composition bias toward low complexity. Composition is skewed to polar residues over residues 325–339 (PHANSASDISGQSGS), 347–358 (STGSFASTSSPR), 383–412 (QPTNGMPSGNPLQTSANETPVLDQNASTKK), and 421–433 (QMQQPRQLNTPTP). A compositionally biased stretch (low complexity) spans 445-463 (SNSSLQSGQGTQQAQQRSG). In terms of domain architecture, QLQ spans 463–499 (GFTKQQLHVLKAQILAFRRLKKGEGSLPPELLQAISP). Basic and acidic residues-rich tracts occupy residues 517–537 (VQDRSSDKTGEDQARSLECGK) and 611–621 (PRSDSTADKGK). Positions 626–638 (DGSQSKVPPQANS) are enriched in polar residues. A Nuclear localization signal 1 motif is present at residues 705–712 (LKKINGLL). A coiled-coil region spans residues 726–795 (VLRLQIEEKK…QKAVREKQLK (70 aa)). In terms of domain architecture, Helicase ATP-binding spans 993–1158 (LSLYNNKLNG…WSLLNLLLPD (166 aa)). 1006-1013 (DEMGLGKT) is an ATP binding site. Residues 1109–1129 (DEAQRMKDRESVLARDLDRYR) are a coiled coil. Residues 1312–1489 (ILDRILIKLQ…QYKIDMADEV (178 aa)) enclose the Helicase C-terminal domain. Disordered stretches follow at residues 1583–1775 (SKKP…DEEQ) and 1789–1894 (LRPR…NAGA). Positions 1608-1617 (KRGRPKSKKI) are enriched in basic residues. Positions 1618-1638 (NYKEIEDDIAGYSEESSEERN) form a coiled coil. The residue at position 1641 (Ser1641) is a Phosphoserine. The segment covering 1642–1657 (GNEEEGDIRQFDDDEL) has biased composition (acidic residues). Residues 1821–1832 (TVVDSHSSRQDQ) are compositionally biased toward basic and acidic residues. The span at 1833–1842 (SDSSSRLRSV) shows a compositional bias: low complexity. Polar residues-rich tracts occupy residues 1848 to 1870 (ASTSKLHVSSPKSGRLNATQLTV) and 1882 to 1892 (DGTSPISSSNA). The region spanning 1895–2005 (RMSHIIQKRC…NLFFDLLKMS (111 aa)) is the Bromo domain. A Nuclear localization signal 2 motif is present at residues 1901-1908 (QKRCKIVI). Residues 2022–2032 (GSAPTLVSTPT) show a composition bias toward polar residues. A disordered region spans residues 2022–2193 (GSAPTLVSTP…DSGKRRPSHL (172 aa)). The residue at position 2137 (Ser2137) is a Phosphoserine. A compositionally biased stretch (polar residues) spans 2149 to 2166 (LAQQQRWPNQPTHPNNSG).

Belongs to the SNF2/RAD54 helicase family. As to quaternary structure, interacts with SWI3B, SWI3C, H3 and H4, but not with SWI3A, SWI3D or BSH. Interacts with LFY. Interacts with REF6. Binds to FGT1. In terms of tissue distribution, highly expressed in inflorescences and leaves. Low expression in siliques, roots and seedlings. Detected in shoot apical meristem, root meristem, vascular tissue of developing leaves, petals, stamens filaments, anthers and carpels.

Its subcellular location is the nucleus. It carries out the reaction ATP + H2O = ADP + phosphate + H(+). Its function is as follows. ATPase subunit of a multiprotein complex equivalent of the SWI/SNF complex that acts by remodeling the chromatin by catalyzing an ATP-dependent alteration in the structure of nucleosomal DNA. Represses embryonic genes in leaves and controls shoot development and flowering. Activates flower homeotic genes. The association of BRM with its target genes requires REF6. Necessary to acquire heat stress (HS) memory, by globally binding to HS memory genes. The polypeptide is ATP-dependent helicase BRM (Arabidopsis thaliana (Mouse-ear cress)).